A 171-amino-acid polypeptide reads, in one-letter code: MPLLDSFAVDHTRMQAPAVRVAKTMNTPHGDTITVFDLRFCVPNKEVMPEKGIHTLEHLFAGFMRDHLNGNGVEIIDISPMGCRTGFYMSLIGTPDEQRVADAWKAAMADVLKVQDQNQIPELNVYQCGTWQMHSLNEAQEIARHILDCDIRVNNNTELALPKEKLQELHI.

Fe cation contacts are provided by His54, His58, and Cys128.

This sequence belongs to the LuxS family. As to quaternary structure, homodimer. Fe cation is required as a cofactor.

The catalysed reaction is S-(5-deoxy-D-ribos-5-yl)-L-homocysteine = (S)-4,5-dihydroxypentane-2,3-dione + L-homocysteine. Its function is as follows. Involved in the synthesis of autoinducer 2 (AI-2) which is secreted by bacteria and is used to communicate both the cell density and the metabolic potential of the environment. The regulation of gene expression in response to changes in cell density is called quorum sensing. Catalyzes the transformation of S-ribosylhomocysteine (RHC) to homocysteine (HC) and 4,5-dihydroxy-2,3-pentadione (DPD). This is S-ribosylhomocysteine lyase from Salmonella arizonae (strain ATCC BAA-731 / CDC346-86 / RSK2980).